Reading from the N-terminus, the 299-residue chain is MTEFRSGFVCLVGRPNTGKSTLTNALVGTKVAITSMRPQTTRHTIRGIVHRDDFQIILVDTPGLHRPRTLLGKRLNDLVRDTYAEVDVIGLCIPADEAIGPGDRWIVEQIRATAPKTTLVAIVTKIDKVPKDRVAAQLVAVSELVGDSAEIVPVSAVTGAQVDIVIDVLAAALPPGPAYYPDGELTDEPEEVLMAELIREAALEGVRDELPHSLAVVIDEVNPREDRDDLIDVHALLYVERDSQKGIIIGKGGARLREVGTAARAQIEKLLGTKVYLDLRVKVAKNWQSDPKQLGRLGF.

Residues 5 to 175 (RSGFVCLVGR…IDVLAAALPP (171 aa)) form the Era-type G domain. The G1 stretch occupies residues 13-20 (GRPNTGKS). Position 13 to 20 (13 to 20 (GRPNTGKS)) interacts with GTP. Residues 39–43 (QTTRH) form a G2 region. Residues 60-63 (DTPG) are G3. Residues 60–64 (DTPGL) and 124–127 (TKID) each bind GTP. The interval 124 to 127 (TKID) is G4. Residues 154-156 (VSA) form a G5 region. The region spanning 206-285 (VRDELPHSLA…YLDLRVKVAK (80 aa)) is the KH type-2 domain.

The protein belongs to the TRAFAC class TrmE-Era-EngA-EngB-Septin-like GTPase superfamily. Era GTPase family. Monomer.

Its subcellular location is the cell envelope. The protein resides in the secreted. It localises to the cell wall. Functionally, exhibits GTPase activity. Binds RNA but is probably not involved in ribosome assembly in mycobacteria. The protein is GTPase Era of Mycobacterium avium (strain 104).